Here is a 628-residue protein sequence, read N- to C-terminus: Serine/threonine-protein kinase Nek11 (628 aa).

A Protein kinase domain is found at tyrosine 30–methionine 288. Residues leucine 36 to valine 44 and lysine 62 contribute to the ATP site. The active-site Proton acceptor is the aspartate 159. Serine 274 carries the phosphoserine; by CHEK1 modification. The stretch at tryptophan 347–glycine 385 forms a coiled coil. Over residues serine 452 to isoleucine 463 the composition is skewed to acidic residues. The segment at serine 452 to glutamate 475 is disordered.

The protein belongs to the protein kinase superfamily. NEK Ser/Thr protein kinase family. NIMA subfamily. In terms of assembly, interacts with NEK2. It depends on Mn(2+) as a cofactor. Mg(2+) is required as a cofactor. Phosphorylated by NEK2. Phosphorylation at Ser-274 is important for its activation.

The protein localises to the nucleus. The protein resides in the nucleolus. The enzyme catalyses L-seryl-[protein] + ATP = O-phospho-L-seryl-[protein] + ADP + H(+). It catalyses the reaction L-threonyl-[protein] + ATP = O-phospho-L-threonyl-[protein] + ADP + H(+). Autorepressed by intramolecular binding of the C-terminus which dissociates following phosphorylation by NEK2. Activated in response to DNA damage. Inhibited by zinc. In terms of biological role, protein kinase which plays an important role in the G2/M checkpoint response to DNA damage. Controls degradation of CDC25A by directly phosphorylating it on residues whose phosphorylation is required for BTRC-mediated polyubiquitination and degradation. The polypeptide is Serine/threonine-protein kinase Nek11 (Mus musculus (Mouse)).